We begin with the raw amino-acid sequence, 156 residues long: ATP synthase subunit b (156 aa).

The chain crosses the membrane as a helical span at residues 7–27 (LIGQLIAFAIFVAFCMKFVWP).

It belongs to the ATPase B chain family. In terms of assembly, F-type ATPases have 2 components, F(1) - the catalytic core - and F(0) - the membrane proton channel. F(1) has five subunits: alpha(3), beta(3), gamma(1), delta(1), epsilon(1). F(0) has three main subunits: a(1), b(2) and c(10-14). The alpha and beta chains form an alternating ring which encloses part of the gamma chain. F(1) is attached to F(0) by a central stalk formed by the gamma and epsilon chains, while a peripheral stalk is formed by the delta and b chains.

The protein localises to the cell inner membrane. In terms of biological role, f(1)F(0) ATP synthase produces ATP from ADP in the presence of a proton or sodium gradient. F-type ATPases consist of two structural domains, F(1) containing the extramembraneous catalytic core and F(0) containing the membrane proton channel, linked together by a central stalk and a peripheral stalk. During catalysis, ATP synthesis in the catalytic domain of F(1) is coupled via a rotary mechanism of the central stalk subunits to proton translocation. Component of the F(0) channel, it forms part of the peripheral stalk, linking F(1) to F(0). In Pasteurella multocida (strain Pm70), this protein is ATP synthase subunit b.